A 148-amino-acid polypeptide reads, in one-letter code: Large ribosomal subunit protein bL27m (148 aa).

A mitochondrion-targeting transit peptide spans 1–30 (MAAAALTLRTRAAVTALLSPTAPTALAVRH). The segment at 28-48 (VRHASKKTGGSSKNLGGKSRG) is disordered.

This sequence belongs to the bacterial ribosomal protein bL27 family. In terms of assembly, component of the mitochondrial ribosome large subunit (39S) which comprises a 16S rRNA and about 50 distinct proteins.

Its subcellular location is the mitochondrion. This is Large ribosomal subunit protein bL27m (Mrpl27) from Mus musculus (Mouse).